The following is a 499-amino-acid chain: Thioredoxin reductase 1, cytoplasmic (499 aa).

Residues 22–23, 42–43, 58–59, and 63–67 each bind FAD; these read SG, DF, TC, and GCIPK. A disulfide bridge links Cys59 with Cys64. Lys68 carries the N6-succinyllysine modification. The residue at position 131 (Tyr131) is a Phosphotyrosine. Residues 131–132 and Thr161 each bind FAD; that span reads YG. NADP(+) contacts are provided by residues Arg166, 198–204, 221–222, Arg226, 226–228, 292–293, and Lys315; these read ASYVALE, RS, RGF, and GR. Tyr200 serves as a coordination point for FAD. FAD-binding positions include Asp334, 341-343, and His472; that span reads ELT. Glu341 contributes to the NADP(+) binding site. Catalysis depends on His472, which acts as the Proton acceptor. Residues 497-498 constitute a cross-link (cysteinyl-selenocysteine (Cys-Sec)); that stretch reads CU. A non-standard amino acid (selenocysteine) is located at residue Sec498.

Belongs to the class-I pyridine nucleotide-disulfide oxidoreductase family. In terms of assembly, homodimer. It depends on FAD as a cofactor. ISGylated.

Its subcellular location is the cytoplasm. The catalysed reaction is [thioredoxin]-dithiol + NADP(+) = [thioredoxin]-disulfide + NADPH + H(+). It catalyses the reaction H2O2 + NADPH + H(+) = NADP(+) + 2 H2O. Functionally, reduces disulfideprotein thioredoxin (Trx) to its dithiol-containing form. Homodimeric flavoprotein involved in the regulation of cellular redox reactions, growth and differentiation. Contains a selenocysteine residue at the C-terminal active site that is essential for catalysis. Also has reductase activity on hydrogen peroxide (H2O2). The chain is Thioredoxin reductase 1, cytoplasmic (TXNRD1) from Bos taurus (Bovine).